The chain runs to 661 residues: Pentatricopeptide repeat-containing protein At5g66631 (661 aa).

9 PPR repeats span residues 139-173 (VHFS…GEEK), 176-210 (CTES…GGIP), 211-245 (NSRT…RITR), 246-280 (TLKH…GKFP), 410-444 (DAYT…GIKL), 445-475 (PFST…DRTL), 484-518 (LMLL…GVSP), 519-553 (DIQT…GLEP), and 554-588 (DPYM…NLMP).

The protein belongs to the PPR family. P subfamily.

The chain is Pentatricopeptide repeat-containing protein At5g66631 from Arabidopsis thaliana (Mouse-ear cress).